The following is a 1174-amino-acid chain: Ribonucleoside-diphosphate reductase large subunit-like protein (1174 aa).

An RIP homotypic interaction motif (RHIM) motif is present at residues 50–72; sequence PYVRIMNGVSGIQIGNHNAMSIA. Disordered stretches follow at residues 170-269 and 291-325; these read ASNA…KLKP and AAAA…DQSS. Composition is skewed to low complexity over residues 182–202, 233–243, and 291–316; these read ATSG…AATA, HVSVGTQATPS, and AAAA…AMAT.

The protein belongs to the ribonucleoside diphosphate reductase large chain family. As to quaternary structure, self-assembles into homo-oligomeric amyloid fibrils. Interacts with host RIPK1 (via RIP homotypic interaction motif); this interaction inhibits RIPK1 ubiquitination thereby preventing effective activation of host NF-kappa-B. Interacts with host RIPK3 (via RIP homotypic interaction motif); this interaction disrupts RIPK3-RIPK1 interactions characteristic of TNF-alpha induced necroptosis, thereby suppressing this death pathway. Interacts (via RIP homotypic interaction motif) with host ZBP1 (via RIP homotypic interaction motif); this interaction inhibits recruitment of RIPK1 and RIPK3 to ZBP1 and prevents ZBP1-induced NF-kappa-B activation. Undergoes proteolytic cleavage, generating two peptides, a N-terminal and a 116 kDa. The N-terminal peptide retains RIPK1- and RIPK3-binding activity as well as cell death suppression activity.

The protein resides in the virion. It is found in the host cytoplasm. Functionally, provides optimal viral replication conditions by promoting host cell survival and avoiding the host inflammatory response linked to NF-kappa-B activation. Blocks RIPK1 ubiquitination, thereby preventing NF-kappa-B activation and virally induced inflammatory response. Prevents host necroptosis by targeting RIPK3 thereby preventing the formation of necroptotic RIPK1-RIPK3 complexes. Also inhibits ZBP1-induced necroptosis. Does not have ribonucleotide reductase activity. Betaherpesviruses probably use another strategy to expand the dNTP pool in a quiescent host cell. This chain is Ribonucleoside-diphosphate reductase large subunit-like protein, found in Murid herpesvirus 1 (strain Smith) (MuHV-1).